The sequence spans 423 residues: COP9 signalosome complex subunit 3 (423 aa).

Residues 197 to 365 enclose the PCI domain; that stretch reads NFERALYFYE…GMVCFHDNPE (169 aa). Residues 402 to 423 are disordered; that stretch reads QFVQKSMGSQEDDSGTKPSSYS.

It belongs to the CSN3 family. As to quaternary structure, component of the CSN complex, probably composed of COPS1, COPS2, COPS3, COPS4, COPS5, COPS6, COPS7, COPS8 and COPS9.

Its subcellular location is the cytoplasm. It is found in the nucleus. Its function is as follows. Component of the COP9 signalosome complex (CSN), a complex involved in various cellular and developmental processes. The CSN complex is an essential regulator of the ubiquitin (Ubl) conjugation pathway by mediating the deneddylation of the cullin subunits of E3 ligase complexes, leading to modify the Ubl ligase activity. The polypeptide is COP9 signalosome complex subunit 3 (COPS3) (Gallus gallus (Chicken)).